A 593-amino-acid polypeptide reads, in one-letter code: V-type ATP synthase alpha chain (593 aa).

Position 246-253 (246-253 (GPFGAGKT)) interacts with ATP.

It belongs to the ATPase alpha/beta chains family.

The enzyme catalyses ATP + H2O + 4 H(+)(in) = ADP + phosphate + 5 H(+)(out). In terms of biological role, produces ATP from ADP in the presence of a proton gradient across the membrane. The V-type alpha chain is a catalytic subunit. This is V-type ATP synthase alpha chain from Protochlamydia amoebophila (strain UWE25).